Here is a 307-residue protein sequence, read N- to C-terminus: Mitochondrial brown fat uncoupling protein 1 (307 aa).

Topologically, residues 2 to 10 (VNPTTSEVH) are mitochondrial intermembrane. The helical transmembrane segment at 11–32 (PTMGVKIFSAGVAACLADIITF) threads the bilayer. Solcar repeat units follow at residues 11–102 (PTMG…VQEY), 111–201 (PTLG…MKGA), and 210–295 (DDVP…LKKE). Topologically, residues 33-73 (PLDTAKVRLQIQGEGQISSTIRYKGVLGTITTLAKTEGLPK) are mitochondrial matrix. A fatty acid 16:0-binding site is contributed by Lys-56. A helical membrane pass occupies residues 74–96 (LYSGLPAGIQRQISFASLRIGLY). The Mitochondrial intermembrane segment spans residues 97–116 (DTVQEYFSSGKETPPTLGNR). The helical transmembrane segment at 117 to 133 (ISAGLMTGGVAVFIGQP) threads the bilayer. Over 134–178 (TEVVKVRLQAQSHLHGIKPRYTGTYNAYRIIATTESFSTLWKGTT) the chain is Mitochondrial matrix. A helical transmembrane segment spans residues 179 to 195 (PNLLRNVIINCVELVTY). Residues 196 to 212 (DLMKGALVNNQILADDV) lie on the Mitochondrial intermembrane side of the membrane. Residues 213-232 (PCHLLSAFVAGFCTTFLASP) form a helical membrane-spanning segment. Residues 233–266 (ADVVKTRFINSLPGQYPSVPSCAMTMLTKEGPTA) lie on the Mitochondrial matrix side of the membrane. The residue at position 254 (Cys-254) is a Cysteine sulfenic acid (-SOH). Residues 267–289 (FFKGFVPSFLRLASWNVIMFVCF) form a helical membrane-spanning segment. Lys-269 is a binding site for fatty acid 16:0. The Mitochondrial intermembrane portion of the chain corresponds to 290–307 (EQLKKELSKSRQTVDCTT).

It belongs to the mitochondrial carrier (TC 2.A.29) family. Most probably functions as a monomer. Binds one purine nucleotide per monomer. However, has also been suggested to function as a homodimer or a homotetramer. Tightly associates with cardiolipin in the mitochondrion inner membrane; may stabilize and regulate its activity. Post-translationally, may undergo sulfenylation upon cold exposure. May increase the sensitivity of UCP1 thermogenic function to the activation by noradrenaline probably through structural effects. May undergo ubiquitin-mediated proteasomal degradation. As to expression, brown adipose tissue.

It is found in the mitochondrion inner membrane. The catalysed reaction is H(+)(in) = H(+)(out). With respect to regulation, has no constitutive proton transporter activity and has to be activated by long-chain fatty acids/LCFAs. Inhibited by purine nucleotides. Both purine nucleotides and LCFAs bind the cytosolic side of the transporter and directly compete to activate or inhibit it. Activated by noradrenaline and reactive oxygen species. Despite lacking canonical translational encoding for selenocysteine, a small pool of the protein has been observed to selectively incorporate selenocysteine at 'Cys-254'. Selenocysteine-modified protein is highly sensitive to redox modification and may constitute a pool of protein highly sensitive to activation by elevated levels of reactive oxygen species (ROS). In terms of biological role, mitochondrial protein responsible for thermogenic respiration, a specialized capacity of brown adipose tissue and beige fat that participates in non-shivering adaptive thermogenesis to temperature and diet variations and more generally to the regulation of energy balance. Functions as a long-chain fatty acid/LCFA and proton symporter, simultaneously transporting one LCFA and one proton through the inner mitochondrial membrane. However, LCFAs remaining associated with the transporter via their hydrophobic tails, it results in an apparent transport of protons activated by LCFAs. Thereby, dissipates the mitochondrial proton gradient and converts the energy of substrate oxydation into heat instead of ATP. Regulates the production of reactive oxygen species/ROS by mitochondria. The chain is Mitochondrial brown fat uncoupling protein 1 from Mesocricetus auratus (Golden hamster).